The following is a 207-amino-acid chain: Small ribosomal subunit protein uS4 (207 aa).

The interval 31 to 53 (KAKFDSKPGQHGRTSGTRTSDFG) is disordered. Over residues 42 to 52 (GRTSGTRTSDF) the composition is skewed to polar residues. Residues 97-158 (SRLDNVVYRM…KSKKQTRVTE (62 aa)) enclose the S4 RNA-binding domain.

Belongs to the universal ribosomal protein uS4 family. As to quaternary structure, part of the 30S ribosomal subunit. Contacts protein S5. The interaction surface between S4 and S5 is involved in control of translational fidelity.

Its function is as follows. One of the primary rRNA binding proteins, it binds directly to 16S rRNA where it nucleates assembly of the body of the 30S subunit. In terms of biological role, with S5 and S12 plays an important role in translational accuracy. The polypeptide is Small ribosomal subunit protein uS4 (Polaromonas sp. (strain JS666 / ATCC BAA-500)).